A 259-amino-acid polypeptide reads, in one-letter code: Phosphate import ATP-binding protein PstB (259 aa).

The 244-residue stretch at 5–248 folds into the ABC transporter domain; that stretch reads IEVNDLNVYY…NIIFSNPSAQ (244 aa). Position 37–44 (37–44) interacts with ATP; that stretch reads GPSGCGKS.

Belongs to the ABC transporter superfamily. Phosphate importer (TC 3.A.1.7) family. As to quaternary structure, the complex is composed of two ATP-binding proteins (PstB), two transmembrane proteins (PstC and PstA) and a solute-binding protein (PstS).

It localises to the cell membrane. The enzyme catalyses phosphate(out) + ATP + H2O = ADP + 2 phosphate(in) + H(+). Part of the ABC transporter complex PstSACB involved in phosphate import. Responsible for energy coupling to the transport system. The protein is Phosphate import ATP-binding protein PstB of Leifsonia xyli subsp. xyli (strain CTCB07).